The sequence spans 603 residues: Growth-regulating factor 6 (603 aa).

Residues 34 to 58 form a disordered region; the sequence is KHGRGNAGDQEHEWRPPAKQARGGD. The region spanning 158 to 193 is the QLQ domain; it reads PFTPSQWIELEHQALIYKYLAANSPVPHSLLIPIRR. A WRC domain is found at 223–267; the sequence is DPEPGRCRRTDGKKWRCSRDAVADQKYCERHMNRGRHRSRKHVEG. 2 short sequence motifs (bipartite nuclear localization signal) span residues 228-238 and 256-263; these read RCRRTDGKKWR and RGRHRSRK. The segment covering 561-571 has biased composition (low complexity); that stretch reads FGSVSSSTGSS. The interval 561-582 is disordered; the sequence is FGSVSSSTGSSPRLENHSVYDG.

The protein belongs to the GRF family.

Its subcellular location is the nucleus. Transcription activator that plays a regulatory role in gibberellin-induced stem elongation. This is Growth-regulating factor 6 (GRF6) from Oryza sativa subsp. japonica (Rice).